Here is a 389-residue protein sequence, read N- to C-terminus: Heat-inducible transcription repressor HrcA (389 aa).

The protein belongs to the HrcA family.

In terms of biological role, negative regulator of class I heat shock genes (grpE-dnaK-dnaJ and groELS operons). Prevents heat-shock induction of these operons. The sequence is that of Heat-inducible transcription repressor HrcA from Synechococcus sp. (strain JA-2-3B'a(2-13)) (Cyanobacteria bacterium Yellowstone B-Prime).